Here is a 755-residue protein sequence, read N- to C-terminus: Actin-related protein 5 (755 aa).

Ser-7 carries the phosphoserine modification. Residue Lys-12 forms a Glycyl lysine isopeptide (Lys-Gly) (interchain with G-Cter in ubiquitin) linkage. Thr-24 is modified (phosphothreonine). Phosphoserine is present on Ser-383. The segment at 418–444 (QRFLKASQDARQKAKEEKERVAKEEEE) is disordered. Positions 425-444 (QDARQKAKEEKERVAKEEEE) are enriched in basic and acidic residues.

It belongs to the actin family. In terms of assembly, component of the chromatin-remodeling INO80 complex, at least composed of ARP4, ARP5, ARP8, RVB1, RVB2, TAF14, NHP10, IES1, IES3, IES4, IES6, ACT1, IES2, IES5 and INO80.

It is found in the nucleus. In terms of biological role, probably involved in transcription regulation via its interaction with the INO80 complex, a chromatin remodeling complex. In Saccharomyces cerevisiae (strain ATCC 204508 / S288c) (Baker's yeast), this protein is Actin-related protein 5 (ARP5).